Here is a 365-residue protein sequence, read N- to C-terminus: Alanine racemase (365 aa).

K32 serves as the catalytic Proton acceptor; specific for D-alanine. K32 carries the N6-(pyridoxal phosphate)lysine modification. R128 is a binding site for substrate. The active-site Proton acceptor; specific for L-alanine is the Y257. Residue M305 participates in substrate binding.

It belongs to the alanine racemase family. Pyridoxal 5'-phosphate serves as cofactor.

The catalysed reaction is L-alanine = D-alanine. It functions in the pathway amino-acid biosynthesis; D-alanine biosynthesis; D-alanine from L-alanine: step 1/1. Catalyzes the interconversion of L-alanine and D-alanine. May also act on other amino acids. The protein is Alanine racemase (alr) of Francisella tularensis subsp. novicida (strain U112).